Here is a 379-residue protein sequence, read N- to C-terminus: Histidinol-phosphate aminotransferase (379 aa).

An N6-(pyridoxal phosphate)lysine modification is found at lysine 231.

Belongs to the class-II pyridoxal-phosphate-dependent aminotransferase family. Histidinol-phosphate aminotransferase subfamily. In terms of assembly, homodimer. It depends on pyridoxal 5'-phosphate as a cofactor.

The catalysed reaction is L-histidinol phosphate + 2-oxoglutarate = 3-(imidazol-4-yl)-2-oxopropyl phosphate + L-glutamate. Its pathway is amino-acid biosynthesis; L-histidine biosynthesis; L-histidine from 5-phospho-alpha-D-ribose 1-diphosphate: step 7/9. This chain is Histidinol-phosphate aminotransferase, found in Mycolicibacterium smegmatis (strain ATCC 700084 / mc(2)155) (Mycobacterium smegmatis).